The sequence spans 239 residues: Fatty acid metabolism regulator protein (239 aa).

Positions 6–74 constitute an HTH gntR-type domain; it reads QSPAGFAEEY…HGKPTKINNF (69 aa). The H-T-H motif DNA-binding region spans 34 to 53; sequence ERELSELIGVTRTTLREVLQ.

Homodimer.

The protein localises to the cytoplasm. Its function is as follows. Multifunctional regulator of fatty acid metabolism. This Pectobacterium atrosepticum (strain SCRI 1043 / ATCC BAA-672) (Erwinia carotovora subsp. atroseptica) protein is Fatty acid metabolism regulator protein.